Here is a 35-residue protein sequence, read N- to C-terminus: MEALVYTFLLVGTLGIIFFAIFFREPPRIIAKTKK.

The helical transmembrane segment at 3–23 threads the bilayer; the sequence is ALVYTFLLVGTLGIIFFAIFF.

Belongs to the PsbT family. As to quaternary structure, PSII is composed of 1 copy each of membrane proteins PsbA, PsbB, PsbC, PsbD, PsbE, PsbF, PsbH, PsbI, PsbJ, PsbK, PsbL, PsbM, PsbT, PsbY, PsbZ, Psb30/Ycf12, at least 3 peripheral proteins of the oxygen-evolving complex and a large number of cofactors. It forms dimeric complexes.

It localises to the plastid. It is found in the chloroplast thylakoid membrane. In terms of biological role, found at the monomer-monomer interface of the photosystem II (PS II) dimer, plays a role in assembly and dimerization of PSII. PSII is a light-driven water plastoquinone oxidoreductase, using light energy to abstract electrons from H(2)O, generating a proton gradient subsequently used for ATP formation. This Chara vulgaris (Common stonewort) protein is Photosystem II reaction center protein T.